A 665-amino-acid chain; its full sequence is Syntabulin (665 aa).

Residues Met-1 to Arg-22 show a composition bias toward basic and acidic residues. Positions Met-1–Tyr-271 are disordered. The segment at Gly-2–Glu-421 is sufficient for interaction with KIF5B. Residues Pro-35–Pro-52 are compositionally biased toward low complexity. Ser-54 is subject to Phosphoserine. The span at Phe-61–Ser-77 shows a compositional bias: low complexity. Residues Cys-85–Gly-101 are compositionally biased toward polar residues. Ser-111 is subject to Phosphoserine. Low complexity predominate over residues Gly-141–Ser-162. Residues Met-168–Arg-180 show a composition bias toward polar residues. Low complexity predominate over residues Ser-225 to Ser-245. The stretch at Leu-275–Lys-357 forms a coiled coil. Residues Arg-314–Glu-421 form a sufficient for interaction with STX1A region. A phosphoserine mark is found at Ser-400 and Ser-557. Residues Phe-609–Ser-629 traverse the membrane as a helical segment.

As to quaternary structure, interacts with STX1A and KIF5B.

The protein localises to the golgi apparatus membrane. Part of a kinesin motor-adapter complex that is critical for the anterograde axonal transport of active zone components and contributes to activity-dependent presynaptic assembly during neuronal development. The protein is Syntabulin (Sybu) of Mus musculus (Mouse).